We begin with the raw amino-acid sequence, 83 residues long: Exodeoxyribonuclease 7 small subunit (83 aa).

Belongs to the XseB family. In terms of assembly, heterooligomer composed of large and small subunits.

It localises to the cytoplasm. The catalysed reaction is Exonucleolytic cleavage in either 5'- to 3'- or 3'- to 5'-direction to yield nucleoside 5'-phosphates.. Functionally, bidirectionally degrades single-stranded DNA into large acid-insoluble oligonucleotides, which are then degraded further into small acid-soluble oligonucleotides. This Allorhizobium ampelinum (strain ATCC BAA-846 / DSM 112012 / S4) (Agrobacterium vitis (strain S4)) protein is Exodeoxyribonuclease 7 small subunit.